A 353-amino-acid polypeptide reads, in one-letter code: Photosystem II D2 protein (353 aa).

Threonine 2 carries the N-acetylthreonine modification. Threonine 2 carries the post-translational modification Phosphothreonine. Residues 41-61 (CAYFAVGGWFTGTTFVTSWYT) form a helical membrane-spanning segment. Position 118 (histidine 118) interacts with chlorophyll a. A helical membrane pass occupies residues 125–141 (GFMLRQFELARSVQLRP). Pheophytin a-binding residues include glutamine 130 and asparagine 143. Residues 153 to 166 (VFVSVFLIYPLGQS) traverse the membrane as a helical segment. Histidine 198 lines the chlorophyll a pocket. A helical transmembrane segment spans residues 208–228 (AALLCAIHGATVENTLFEDGD). A plastoquinone is bound by residues histidine 215 and phenylalanine 262. Fe cation is bound at residue histidine 215. Histidine 269 contributes to the Fe cation binding site. The helical transmembrane segment at 279 to 295 (GLWMSALGVVGLALNLR) threads the bilayer.

This sequence belongs to the reaction center PufL/M/PsbA/D family. In terms of assembly, PSII is composed of 1 copy each of membrane proteins PsbA, PsbB, PsbC, PsbD, PsbE, PsbF, PsbH, PsbI, PsbJ, PsbK, PsbL, PsbM, PsbT, PsbX, PsbY, PsbZ, Psb30/Ycf12, at least 3 peripheral proteins of the oxygen-evolving complex and a large number of cofactors. It forms dimeric complexes. The cofactor is The D1/D2 heterodimer binds P680, chlorophylls that are the primary electron donor of PSII, and subsequent electron acceptors. It shares a non-heme iron and each subunit binds pheophytin, quinone, additional chlorophylls, carotenoids and lipids. There is also a Cl(-1) ion associated with D1 and D2, which is required for oxygen evolution. The PSII complex binds additional chlorophylls, carotenoids and specific lipids..

It is found in the plastid. The protein resides in the chloroplast thylakoid membrane. It carries out the reaction 2 a plastoquinone + 4 hnu + 2 H2O = 2 a plastoquinol + O2. In terms of biological role, photosystem II (PSII) is a light-driven water:plastoquinone oxidoreductase that uses light energy to abstract electrons from H(2)O, generating O(2) and a proton gradient subsequently used for ATP formation. It consists of a core antenna complex that captures photons, and an electron transfer chain that converts photonic excitation into a charge separation. The D1/D2 (PsbA/PsbD) reaction center heterodimer binds P680, the primary electron donor of PSII as well as several subsequent electron acceptors. D2 is needed for assembly of a stable PSII complex. This is Photosystem II D2 protein from Guizotia abyssinica (Niger).